A 162-amino-acid polypeptide reads, in one-letter code: UPF0114 protein PFLU_5318 (162 aa).

3 consecutive transmembrane segments (helical) span residues 15–35 (LLAP…LKFF), 53–73 (LILV…LVMV), and 136–156 (LMWY…MGYL).

The protein belongs to the UPF0114 family.

Its subcellular location is the cell membrane. The polypeptide is UPF0114 protein PFLU_5318 (Pseudomonas fluorescens (strain SBW25)).